Here is a 507-residue protein sequence, read N- to C-terminus: Protein MosB (507 aa).

Residues 256–275 (QAHGALYKGQHVGLLSDIGC) constitute a DNA-binding region (H-T-H motif). The residue at position 282 (K282) is an N6-(pyridoxal phosphate)lysine.

It belongs to the DegT/DnrJ/EryC1 family.

Its function is as follows. Involved in the biosynthesis of the rhizopine 3-O-methyl-scyllo-inosamine. May have a regulatory role in controlling the housekeeping genes within the nodule which are involved in the biosynthesis of the rhizopine backbone. The sequence is that of Protein MosB (mosB) from Rhizobium meliloti (Ensifer meliloti).